The chain runs to 190 residues: Elongation factor P-like protein (190 aa).

It belongs to the elongation factor P family.

The sequence is that of Elongation factor P-like protein from Psychromonas ingrahamii (strain DSM 17664 / CCUG 51855 / 37).